A 485-amino-acid chain; its full sequence is Lysophospholipid acyltransferase 5 (485 aa).

An N-acetylalanine modification is found at A2. The next 7 helical transmembrane spans lie at 35-55, 82-102, 108-128, 139-158, 176-196, 232-252, and 283-303; these read ASEQ…FALF, YNFG…FLIL, TITA…AGYY, WTMP…MDYY, IWGV…GAFL, LALG…ITED, and VTCW…FNGL. Residues N336 and H372 contribute to the active site. A run of 3 helical transmembrane segments spans residues 362-382, 420-440, and 448-468; these read GLSL…LVCF, LAQQ…FCLF, and VYKS…FILP. The Di-lysine motif motif lies at 482 to 485; it reads KKME.

Belongs to the membrane-bound acyltransferase family.

It is found in the endoplasmic reticulum membrane. The enzyme catalyses a 1-acyl-sn-glycero-3-phosphocholine + an acyl-CoA = a 1,2-diacyl-sn-glycero-3-phosphocholine + CoA. It carries out the reaction a 1-acyl-sn-glycero-3-phosphoethanolamine + an acyl-CoA = a 1,2-diacyl-sn-glycero-3-phosphoethanolamine + CoA. The catalysed reaction is a 1-acyl-sn-glycero-3-phospho-L-serine + an acyl-CoA = a 1,2-diacyl-sn-glycero-3-phospho-L-serine + CoA. It catalyses the reaction (9Z,12Z)-octadecadienoyl-CoA + a 1-acyl-sn-glycero-3-phosphocholine = 1-acyl-2-(9Z,12Z)-octadecadienoyl-sn-glycero-3-phosphocholine + CoA. The enzyme catalyses (5Z,8Z,11Z,14Z)-eicosatetraenoyl-CoA + a 1-acyl-sn-glycero-3-phosphocholine = 1-acyl-2-(5Z,8Z,11Z,14Z-eicosatetraenoyl)-sn-glycero-3-phosphocholine + CoA. It carries out the reaction dodecanoyl-CoA + 1-hexadecanoyl-sn-glycero-3-phosphocholine = 1-hexadecanoyl-2-dodecanoyl-sn-glycero-3-phosphocholine + CoA. The catalysed reaction is octadecanoyl-CoA + 1-hexadecanoyl-sn-glycero-3-phosphocholine = 1-hexadecanoyl-2-octadecanoyl-sn-glycero-3-phosphocholine + CoA. It catalyses the reaction 1-dodecanoyl-sn-glycero-3-phosphocholine + hexadecanoyl-CoA = 1-dodecanoyl-2-hexadecanoyl-sn-glycero-3-phosphocholine + CoA. The enzyme catalyses 1-tetradecanoyl-sn-glycero-3-phosphocholine + hexadecanoyl-CoA = 1-tetradecanoyl-2-hexadecanoyl-sn-glycero-3-phosphocholine + CoA. It carries out the reaction 1-hexadecanoyl-sn-glycero-3-phosphocholine + hexadecanoyl-CoA = 1,2-dihexadecanoyl-sn-glycero-3-phosphocholine + CoA. The catalysed reaction is 1-octadecanoyl-sn-glycero-3-phosphocholine + hexadecanoyl-CoA = 1-octadecanoyl-2-hexadecanoyl-sn-glycero-3-phosphocholine + CoA. It catalyses the reaction 1-(9Z-octadecenoyl)-sn-glycero-3-phosphocholine + hexadecanoyl-CoA = 1-(9Z-octadecenoyl)-2-hexadecanoyl-sn-glycero-3-phosphocholine + CoA. The enzyme catalyses (9Z)-hexadecenoyl-CoA + 1-hexadecanoyl-sn-glycero-3-phosphocholine = 1-hexadecanoyl-2-(9Z-hexadecenoyl)-sn-glycero-3-phosphocholine + CoA. It carries out the reaction 1-hexadecanoyl-sn-glycero-3-phosphocholine + (9Z)-octadecenoyl-CoA = 1-hexadecanoyl-2-(9Z-octadecenoyl)-sn-glycero-3-phosphocholine + CoA. The catalysed reaction is (9Z,12Z)-octadecadienoyl-CoA + 1-hexadecanoyl-sn-glycero-3-phosphocholine = 1-hexadecanoyl-2-(9Z,12Z-octadecadienoyl)-sn-glycero-3-phosphocholine + CoA. It catalyses the reaction 1-dodecanoyl-sn-glycero-3-phosphocholine + (5Z,8Z,11Z,14Z)-eicosatetraenoyl-CoA = 1-dodecanoyl-2-(5Z,8Z,11Z,14Z)-eicosatetraenoyl-sn-glycero-3-phosphocholine + CoA. The enzyme catalyses (5Z,8Z,11Z,14Z)-eicosatetraenoyl-CoA + 1-hexadecanoyl-sn-glycero-3-phosphocholine = 1-hexadecanoyl-2-(5Z,8Z,11Z,14Z-eicosatetraenoyl)-sn-glycero-3-phosphocholine + CoA. It carries out the reaction 1-octadecanoyl-sn-glycero-3-phosphocholine + (5Z,8Z,11Z,14Z)-eicosatetraenoyl-CoA = 1-octadecanoyl-2-(5Z,8Z,11Z,14Z-eicosatetraenoyl)-sn-glycero-3-phosphocholine + CoA. The catalysed reaction is 1-eicosanoyl-sn-glycero-3-phosphocholine + (5Z,8Z,11Z,14Z)-eicosatetraenoyl-CoA = 1-eicosanoyl-2-(5Z,8Z,11Z,14Z)-eicosatetraenoyl-sn-glycero-3-phosphocholine + CoA. It catalyses the reaction 1-(9Z-octadecenoyl)-sn-glycero-3-phosphocholine + (9Z)-octadecenoyl-CoA = 1,2-di-(9Z-octadecenoyl)-sn-glycero-3-phosphocholine + CoA. The enzyme catalyses 1-(9Z-octadecenoyl)-sn-glycero-3-phosphocholine + (9Z,12Z)-octadecadienoyl-CoA = 1-(9Z)-octadecenoyl-2-(9Z,12Z)-octadecadienoyl-sn-glycero-3-phosphocholine + CoA. It carries out the reaction 1-(9Z-octadecenoyl)-sn-glycero-3-phosphocholine + (5Z,8Z,11Z,14Z)-eicosatetraenoyl-CoA = 1-(9Z)-octadecenoyl-2-(5Z,8Z,11Z,14Z)-icosatetraenoyl-sn-glycero-3-phosphocholine + CoA. The catalysed reaction is a 1-acyl-sn-glycero-3-phosphoethanolamine + (9Z,12Z)-octadecadienoyl-CoA = 1-acyl-2-(9Z,12Z)-octadecadienoyl-sn-glycero-3-phosphoethanolamine + CoA. It catalyses the reaction 1-(9Z-octadecenoyl)-sn-glycero-3-phosphoethanolamine + (9Z,12Z)-octadecadienoyl-CoA = 1-(9Z)-octadecenoyl-2-(9Z,12Z)-octadecadienoyl-sn-glycero-3-phosphoethanolamine + CoA. The enzyme catalyses 1-(10Z-heptadecenoyl)-sn-glycero-3-phosphoethanolamine + (9Z,12Z)-octadecadienoyl-CoA = 1-(10Z-heptadecenoyl)-2-(9Z,12Z-octadecadienoyl)-sn-glycero-3-phosphoethanolamine + CoA. It carries out the reaction a 1-acyl-sn-glycero-3-phosphoethanolamine + (5Z,8Z,11Z,14Z)-eicosatetraenoyl-CoA = 1-acyl-2-(5Z,8Z,11Z,14Z)-eicosatetraenoyl-sn-glycero-3-phosphoethanolamine + CoA. The catalysed reaction is 1-hexadecanoyl-sn-glycero-3-phosphoethanolamine + (5Z,8Z,11Z,14Z)-eicosatetraenoyl-CoA = 1-hexadecanoyl-2-(5Z,8Z,11Z,14Z-eicosatetraenoyl)-sn-glycero-3-phosphoethanolamine + CoA. It catalyses the reaction 1-(9Z-octadecenoyl)-sn-glycero-3-phosphoethanolamine + (5Z,8Z,11Z,14Z)-eicosatetraenoyl-CoA = 1-(9Z)-octadecenoyl-2-(5Z,8Z,11Z,14Z)-eicosatetraenoyl-sn-glycero-3-phosphoethanolamine + CoA. The enzyme catalyses 1-(10Z-heptadecenoyl)-sn-glycero-3-phosphoethanolamine + (5Z,8Z,11Z,14Z)-eicosatetraenoyl-CoA = 1-(10Z-heptadecenoyl)-2-(5Z,8Z,11Z,14Z-eicosatetraenoyl)-sn-glycero-3-phosphoethanolamine + CoA. It carries out the reaction a 1-O-(1Z-alkenyl)-sn-glycero-3-phosphoethanolamine + (5Z,8Z,11Z,14Z)-eicosatetraenoyl-CoA = 1-O-(1Z)-alkenyl-2-(5Z,8Z,11Z,14Z)-eicosatetraenoyl-sn-glycero-3-phosphoethanolamine + CoA. The catalysed reaction is a 1-acyl-sn-glycero-3-phospho-L-serine + (9Z,12Z)-octadecadienoyl-CoA = 1-acyl-2-(9Z,12Z-octadecadienoyl)-sn-glycero-3-phospho-L-serine + CoA. It catalyses the reaction a 1-acyl-sn-glycero-3-phospho-L-serine + (5Z,8Z,11Z,14Z)-eicosatetraenoyl-CoA = 1-acyl-2-(5Z,8Z,11Z,14Z-eicosatetraenoyl)-sn-glycero-3-phospho-L-serine + CoA. The enzyme catalyses 1-hexadecanoyl-sn-glycero-3-phospho-L-serine + (9Z)-octadecenoyl-CoA = 1-hexadecanoyl-2-(9Z-octadecenoyl)-sn-glycero-3-phospho-L-serine + CoA. It carries out the reaction 1-(9Z-octadecenoyl)-sn-glycero-3-phospho-L-serine + (9Z)-octadecenoyl-CoA = 1,2-di-(9Z)-octadecenoyl-sn-glycero-3-phospho-L-serine + CoA. The catalysed reaction is 1-hexadecanoyl-sn-glycero-3-phospho-L-serine + (9Z,12Z)-octadecadienoyl-CoA = 1-hexadecanoyl-2-(9Z,12Z-octadecadienoyl)-sn-glycero-3-phospho-L-serine + CoA. It catalyses the reaction 1-(9Z-octadecenoyl)-sn-glycero-3-phospho-L-serine + (9Z,12Z)-octadecadienoyl-CoA = 1-(9Z-octadecenoyl)-2-(9Z,12Z-octadienoyl)-sn-glycero-3-phospho-L-serine + CoA. The enzyme catalyses 1-hexadecanoyl-sn-glycero-3-phospho-L-serine + (5Z,8Z,11Z,14Z)-eicosatetraenoyl-CoA = 1-hexadecanoyl-2-(5Z,8Z,11Z,14Z-eicosatetraenoyl)-sn-glycero-3-phospho-L-serine + CoA. It carries out the reaction 1-(9Z-octadecenoyl)-sn-glycero-3-phospho-L-serine + (5Z,8Z,11Z,14Z)-eicosatetraenoyl-CoA = 1-(9Z-octadecenoyl)-2-(5Z,8Z,11Z,14Z-eicosatetraenoyl)-sn-glycero-3-phospho-L-serine + CoA. The protein operates within lipid metabolism; phospholipid metabolism. Functionally, lysophospholipid O-acyltransferase (LPLAT) that catalyzes the reacylation step of the phospholipid remodeling process also known as the Lands cycle. Catalyzes transfer of the fatty acyl chain from fatty acyl-CoA to 1-acyl lysophospholipid to form various classes of phospholipids. Converts 1-acyl lysophosphatidylcholine (LPC) into phosphatidylcholine (PC) (LPCAT activity), 1-acyl lysophosphatidylserine (LPS) into phosphatidylserine (PS) (LPSAT activity) and 1-acyl lysophosphatidylethanolamine (LPE) into phosphatidylethanolamine (PE) (LPEAT activity). Favors polyunsaturated fatty acyl-CoAs as acyl donors compared to saturated fatty acyl-CoAs. Has higher activity for LPC acyl acceptors compared to LPEs and LPSs. Can also transfer the fatty acyl chain from fatty acyl-CoA to 1-O-alkyl lysophospholipid or 1-O-alkenyl lysophospholipid with lower efficiency. Acts as a major LPC O-acyltransferase in liver and intestine. As a component of the liver X receptor/NR1H3 or NR1H2 signaling pathway, mainly catalyzes the incorporation of arachidonate into PCs of endoplasmic reticulum (ER) membranes, increasing membrane dynamics and enabling triacylglycerols transfer to nascent very low-density lipoprotein (VLDL) particles. Promotes processing of sterol regulatory protein SREBF1 in hepatocytes, likely by facilitating the translocation of SREBF1-SCAP complex from ER to the Golgi apparatus. Participates in mechanisms by which the liver X receptor/NR1H3 or NR1H2 signaling pathway counteracts lipid-induced ER stress response and inflammation. Down-regulates hepatic inflammation by limiting arachidonic acid availability for synthesis of inflammatory eicosanoids, such as prostaglandins. In enterocytes, acts as a component of a gut-brain feedback loop that coordinates dietary lipid absorption and food intake. Regulates the abundance of PCs containing linoleate and arachidonate in enterocyte membranes, enabling passive diffusion of fatty acids and cholesterol across the membrane for efficient chylomicron assembly. In the intestinal crypt, acts as a component of dietary-responsive phospholipid-cholesterol axis, regulating the biosynthesis of cholesterol and its mitogenic effects on intestinal stem cells. The protein is Lysophospholipid acyltransferase 5 (LPCAT3) of Bos taurus (Bovine).